The sequence spans 368 residues: Peptide chain release factor 2 (368 aa).

The interval 36 to 56 is disordered; sequence EAQAGDPSLWDDPDHAQKVTS. Glutamine 250 carries the N5-methylglutamine modification.

Belongs to the prokaryotic/mitochondrial release factor family. Methylated by PrmC. Methylation increases the termination efficiency of RF2.

Its subcellular location is the cytoplasm. Its function is as follows. Peptide chain release factor 2 directs the termination of translation in response to the peptide chain termination codons UGA and UAA. This is Peptide chain release factor 2 from Corynebacterium aurimucosum (strain ATCC 700975 / DSM 44827 / CIP 107346 / CN-1) (Corynebacterium nigricans).